Reading from the N-terminus, the 722-residue chain is Polyribonucleotide nucleotidyltransferase (722 aa).

D495 and D501 together coordinate Mg(2+). One can recognise a KH domain in the interval 562-621; it reads PRLLSFRIDPELIGTVIGPGGRTIKGITERTNTKIDIEDGGIVTIASHDGVAAEEAQKII. In terms of domain architecture, S1 motif spans 631 to 699; the sequence is GEVFTGSITR…NRGRINLTLR (69 aa).

This sequence belongs to the polyribonucleotide nucleotidyltransferase family. It depends on Mg(2+) as a cofactor.

The protein resides in the cytoplasm. It catalyses the reaction RNA(n+1) + phosphate = RNA(n) + a ribonucleoside 5'-diphosphate. Functionally, involved in mRNA degradation. Catalyzes the phosphorolysis of single-stranded polyribonucleotides processively in the 3'- to 5'-direction. The polypeptide is Polyribonucleotide nucleotidyltransferase (Prochlorococcus marinus (strain SARG / CCMP1375 / SS120)).